Reading from the N-terminus, the 348-residue chain is tRNA (cytosine(34)-C(5))-methyltransferase, mitochondrial (348 aa).

Residues 139 to 145 (CAAPGGK), Glu-162, Asp-193, and Asp-211 contribute to the S-adenosyl-L-methionine site. Cys-265 acts as the Nucleophile in catalysis.

It belongs to the class I-like SAM-binding methyltransferase superfamily. RsmB/NOP family.

It is found in the mitochondrion matrix. The catalysed reaction is cytidine(34) in mitochondrial tRNA + S-adenosyl-L-methionine = 5-methylcytidine(34) in mitochondrial tRNA + S-adenosyl-L-homocysteine + H(+). Mitochondrial tRNA methyltransferase that mediates methylation of cytosine to 5-methylcytosine (m5C) at position 34 of mt-tRNA(Met). mt-tRNA(Met) methylation at cytosine(34) takes place at the wobble position of the anticodon and initiates the formation of 5-formylcytosine (f(5)c) at this position. mt-tRNA(Met) containing the f(5)c modification at the wobble position enables recognition of the AUA codon in addition to the AUG codon, expanding codon recognition in mitochondrial translation. The chain is tRNA (cytosine(34)-C(5))-methyltransferase, mitochondrial from Mus musculus (Mouse).